We begin with the raw amino-acid sequence, 224 residues long: Small ribosomal subunit protein uS5 (224 aa).

The tract at residues 1–38 (MAEQSAGGQGAPEGRDSRDSREGRGRRDGGRGGRDSDK) is disordered. Positions 13–38 (EGRDSRDSREGRGRRDGGRGGRDSDK) are enriched in basic and acidic residues. Residues 41–104 (YLERVVAINR…EEARKGFFRV (64 aa)) enclose the S5 DRBM domain.

It belongs to the universal ribosomal protein uS5 family. As to quaternary structure, part of the 30S ribosomal subunit. Contacts proteins S4 and S8.

With S4 and S12 plays an important role in translational accuracy. Functionally, located at the back of the 30S subunit body where it stabilizes the conformation of the head with respect to the body. The polypeptide is Small ribosomal subunit protein uS5 (Mycobacterium ulcerans (strain Agy99)).